A 178-amino-acid polypeptide reads, in one-letter code: UPF0302 protein BCAH187_A1683 (178 aa).

The protein belongs to the UPF0302 family.

The protein is UPF0302 protein BCAH187_A1683 of Bacillus cereus (strain AH187).